The following is a 518-amino-acid chain: Protein nucleotidyltransferase YdiU (518 aa).

Residues Gly-100, Gly-102, Arg-103, Lys-123, Asp-135, Gly-136, Arg-193, and Arg-200 each contribute to the ATP site. Asp-270 acts as the Proton acceptor in catalysis. Mg(2+) is bound by residues Asn-271 and Asp-280. Residue Asp-280 participates in ATP binding.

It belongs to the SELO family. The cofactor is Mg(2+). Requires Mn(2+) as cofactor.

The enzyme catalyses L-seryl-[protein] + ATP = 3-O-(5'-adenylyl)-L-seryl-[protein] + diphosphate. It catalyses the reaction L-threonyl-[protein] + ATP = 3-O-(5'-adenylyl)-L-threonyl-[protein] + diphosphate. The catalysed reaction is L-tyrosyl-[protein] + ATP = O-(5'-adenylyl)-L-tyrosyl-[protein] + diphosphate. It carries out the reaction L-histidyl-[protein] + UTP = N(tele)-(5'-uridylyl)-L-histidyl-[protein] + diphosphate. The enzyme catalyses L-seryl-[protein] + UTP = O-(5'-uridylyl)-L-seryl-[protein] + diphosphate. It catalyses the reaction L-tyrosyl-[protein] + UTP = O-(5'-uridylyl)-L-tyrosyl-[protein] + diphosphate. Nucleotidyltransferase involved in the post-translational modification of proteins. It can catalyze the addition of adenosine monophosphate (AMP) or uridine monophosphate (UMP) to a protein, resulting in modifications known as AMPylation and UMPylation. The chain is Protein nucleotidyltransferase YdiU from Xanthomonas oryzae pv. oryzae (strain MAFF 311018).